The chain runs to 233 residues: Ycf53-like protein (233 aa).

Belongs to the ycf53 family.

The chain is Ycf53-like protein from Synechocystis sp. (strain ATCC 27184 / PCC 6803 / Kazusa).